Here is a 396-residue protein sequence, read N- to C-terminus: Histidine-rich glycoprotein (396 aa).

Cystatin domains are found at residues 1-102 and 103-169; these read AVNP…SALT and NMRA…RFSA. Cystine bridges form between Cys7/Cys375, Cys56/Cys67, Cys77/Cys92, Cys123/Cys297, Cys137/Cys160, and Cys212/Cys242. N-linked (GlcNAc...) asparagine; partial glycosylation occurs at Asn70. N-linked (GlcNAc...) asparagine glycosylation is found at Asn91 and Asn122. Residues 176-322 are disordered; sequence RPFHSGEHEH…GPGKGHFRFH (147 aa). Residues 197–208 show a composition bias toward basic and acidic residues; that stretch reads GSKDHGHPHESY. An N-linked (GlcNAc...) asparagine glycan is attached at Asn220. The segment covering 233-246 has biased composition (pro residues); it reads LPFPPPGLRCPHPP. Residues 255 to 265 are compositionally biased toward basic and acidic residues; it reads PPHDHSSDEHH. Positions 266–284 are enriched in basic residues; the sequence is PHGHHPHGHHPHGHHPHGH. Positions 285–296 are enriched in basic and acidic residues; the sequence is HPPDNDFYDHGP. The segment covering 304–322 has biased composition (basic residues); that stretch reads PPPRHSKERGPGKGHFRFH. Position 309 is a phosphoserine (Ser309).

As to quaternary structure, interacts (via the HRR domain) with TPM1; the interaction appears to contribute to the antiangiogenic properties of the HRR domain. Interacts with THBS1 (via the TSP type I repeats); the interaction blocks the antiangiogenic effect of THBS1 with CD36. Interacts with PLG (via its Kringle domains); the interaction tethers PLG to the cell surface and enhances its activation. Interacts with THBS2; the interaction blocks the antiangiogenic effect of THBS2 with CD36. Interacts with HPSE; the interaction is enhanced at acidic pH, partially inhibits binding of HPSE to cell surface receptors and modulates its enzymatic activity. Interacts (via the HRR domain) with TMP1; the interaction partially mediates the antiangiogenic properties of HRG. Interacts with kappa and lambda light chains of IgG molecules. Interacts with ATP5F1A; the interaction occurs on the surface of T-cells and alters their cell morphology in concert with CONA. Binds IgG molecules containing kappa and lambda light chains and inhibits the formation of insoluble immunoglobulin complexes. Interacts with F12; the interaction, which is enhanced in the presence of zinc ions and inhibited by heparin-binding to HRG, inhibits factor XII autoactivation and contact-initiated coagulation. N-glycosylated. Post-translationally, proteolytic cleavage produces several HRG fragments which are mostly disulfide-linked and, therefore, not released. On platelet activation, may release a 33 kDa antiangiogenic peptide which encompasses the HRR.

It is found in the secreted. Its function is as follows. Plasma glycoprotein that binds a number of ligands such as heme, heparin, heparan sulfate, thrombospondin, plasminogen, and divalent metal ions. Inhibits rosette formation. Acts as an adapter protein and implicated in regulating many processes such as immune complex and pathogen clearance, cell adhesion, angiogenesis, coagulation and fibrinolysis. Mediates clearance of necrotic cells through enhancing the phagocytosis of necrotic cells in a heparan sulfate-dependent pathway. This process can be regulated by the presence of certain HRG ligands such as heparin and zinc ions. Binds to IgG subclasses of immunoglobins containing kappa and lambda light chains with different affinities regulating their clearance and inhibiting the formation of insoluble immune complexes. Tethers plasminogen to the cell surface. Binds T-cells and alters the cell morphology. Modulates angiogenesis by blocking the CD6-mediated antiangiongenic effect of thrombospondins, THBS1 and THBS2. The chain is Histidine-rich glycoprotein (HRG) from Bos taurus (Bovine).